The following is a 581-amino-acid chain: Multicopper oxidase LPR1 (581 aa).

An N-terminal signal peptide occupies residues 1–28; sequence MESLLCRRRIKRVMVLIIALTWLRSTCG. Cu cation contacts are provided by His148, His150, His196, and His198. Residues Asn254, Asn298, Asn386, and Asn458 are each glycosylated (N-linked (GlcNAc...) asparagine). The Plastocyanin-like domain occupies 283–352; sequence PRLNVRRRKY…DVVVDFYKSP (70 aa). 3 residues coordinate Cu cation: His464, His467, and His469. Asn546 is a glycosylation site (N-linked (GlcNAc...) asparagine). Residues His562, Cys563, His564, His568, and Met573 each contribute to the Cu cation site.

The protein belongs to the multicopper oxidase family. It depends on Cu cation as a cofactor.

It localises to the endoplasmic reticulum membrane. Functionally, multicopper oxidase that may be involved in copper homeostasis and oxidative stress response, and that is necessary for root growth inhibition by low phosphate conditions. Functions together with LPR2 and PDR2 in a common pathway that adjusts root meristem activity to phosphate availability. Oxidizes the substrate 2,2'-azinobis-(3-ethylbenzthiazoline-6-sulphonate) in vitro. This Arabidopsis thaliana (Mouse-ear cress) protein is Multicopper oxidase LPR1 (LPR1).